Consider the following 511-residue polypeptide: ADP,ATP carrier protein 4 (511 aa).

12 helical membrane passes run 34-54 (VSKF…QNLI), 71-91 (ISFL…AIYV), 102-122 (IFYL…YVIF), 157-177 (FSLF…LLFW), 192-212 (FYPL…QFLE), 231-251 (FHTL…IIAI), 296-316 (LIAT…GPWK), 330-350 (AAFI…FVVL), 361-381 (FTAA…FFAV), 390-410 (LIIA…IGAI), 453-473 (LGKS…PSAS), and 476-496 (SISI…LWAT).

The protein belongs to the ADP/ATP translocase tlc family.

It is found in the cell membrane. Provides the rickettsial cell with host ATP in exchange for rickettsial ADP. This is an obligate exchange system. This energy acquiring activity is an important component of rickettsial parasitism. This is ADP,ATP carrier protein 4 (tlcD) from Rickettsia felis (strain ATCC VR-1525 / URRWXCal2) (Rickettsia azadi).